We begin with the raw amino-acid sequence, 315 residues long: uncharacterized protein (315 aa).

Positions 296-308 are enriched in basic residues; the sequence is RSKLRKGTHKRTP. Residues 296–315 form a disordered region; the sequence is RSKLRKGTHKRTPGRAGDAD.

This sequence belongs to the metallo-dependent hydrolases superfamily. Peptidase M19 family.

This is an uncharacterized protein from Acinetobacter calcoaceticus.